Consider the following 490-residue polypeptide: Pleckstrin homology domain-containing family O member 2 (490 aa).

Residues 18 to 119 (MVDKAGWIKK…WIKALNEGIN (102 aa)) form the PH domain. Phosphoserine occurs at positions 164 and 167. The segment at 173–402 (LDLDVPDSGP…DLLGEGPRHP (230 aa)) is disordered. The segment covering 230–243 (APTPVSASSEVSPE) has biased composition (low complexity). A Phosphothreonine modification is found at Thr232. Residues Ser235, Ser237, and Ser238 each carry the phosphoserine modification. Acidic residues predominate over residues 244 to 257 (SQEDSETPAEEDSG). Ser273 is modified (phosphoserine). Positions 277–297 (PSPQEAPAAESAEPSQAPCSE) are enriched in low complexity. Thr298 and Thr311 each carry phosphothreonine. Phosphoserine is present on residues Ser390 and Ser468. The stretch at 439–481 (SAETLLSQAVEQLRQATQVLQEMRDLGELSQEAPGLREKRKEL) forms a coiled coil.

The sequence is that of Pleckstrin homology domain-containing family O member 2 (PLEKHO2) from Homo sapiens (Human).